A 333-amino-acid polypeptide reads, in one-letter code: 4-hydroxy-3-methylbut-2-enyl diphosphate reductase (333 aa).

C20 contacts [4Fe-4S] cluster. (2E)-4-hydroxy-3-methylbut-2-enyl diphosphate-binding residues include H49 and H82. H49 and H82 together coordinate dimethylallyl diphosphate. Isopentenyl diphosphate-binding residues include H49 and H82. C104 is a [4Fe-4S] cluster binding site. A (2E)-4-hydroxy-3-methylbut-2-enyl diphosphate-binding site is contributed by H132. A dimethylallyl diphosphate-binding site is contributed by H132. H132 lines the isopentenyl diphosphate pocket. Residue E134 is the Proton donor of the active site. (2E)-4-hydroxy-3-methylbut-2-enyl diphosphate is bound at residue T172. C202 provides a ligand contact to [4Fe-4S] cluster. 4 residues coordinate (2E)-4-hydroxy-3-methylbut-2-enyl diphosphate: S230, S231, N232, and S274. Dimethylallyl diphosphate contacts are provided by S230, S231, N232, and S274. The isopentenyl diphosphate site is built by S230, S231, N232, and S274.

Belongs to the IspH family. It depends on [4Fe-4S] cluster as a cofactor.

It carries out the reaction isopentenyl diphosphate + 2 oxidized [2Fe-2S]-[ferredoxin] + H2O = (2E)-4-hydroxy-3-methylbut-2-enyl diphosphate + 2 reduced [2Fe-2S]-[ferredoxin] + 2 H(+). It catalyses the reaction dimethylallyl diphosphate + 2 oxidized [2Fe-2S]-[ferredoxin] + H2O = (2E)-4-hydroxy-3-methylbut-2-enyl diphosphate + 2 reduced [2Fe-2S]-[ferredoxin] + 2 H(+). It functions in the pathway isoprenoid biosynthesis; dimethylallyl diphosphate biosynthesis; dimethylallyl diphosphate from (2E)-4-hydroxy-3-methylbutenyl diphosphate: step 1/1. The protein operates within isoprenoid biosynthesis; isopentenyl diphosphate biosynthesis via DXP pathway; isopentenyl diphosphate from 1-deoxy-D-xylulose 5-phosphate: step 6/6. Functionally, catalyzes the conversion of 1-hydroxy-2-methyl-2-(E)-butenyl 4-diphosphate (HMBPP) into a mixture of isopentenyl diphosphate (IPP) and dimethylallyl diphosphate (DMAPP). Acts in the terminal step of the DOXP/MEP pathway for isoprenoid precursor biosynthesis. The polypeptide is 4-hydroxy-3-methylbut-2-enyl diphosphate reductase (Polaromonas sp. (strain JS666 / ATCC BAA-500)).